A 383-amino-acid chain; its full sequence is Acetylornithine deacetylase (383 aa).

H80 serves as a coordination point for Zn(2+). D82 is an active-site residue. D112 is a binding site for Zn(2+). The active site involves E144. Residues E145, E169, and H355 each coordinate Zn(2+).

The protein belongs to the peptidase M20A family. ArgE subfamily. In terms of assembly, homodimer. Zn(2+) is required as a cofactor. Requires Co(2+) as cofactor. Glutathione serves as cofactor.

Its subcellular location is the cytoplasm. The catalysed reaction is N(2)-acetyl-L-ornithine + H2O = L-ornithine + acetate. It functions in the pathway amino-acid biosynthesis; L-arginine biosynthesis; L-ornithine from N(2)-acetyl-L-ornithine (linear): step 1/1. Catalyzes the hydrolysis of the amide bond of N(2)-acetylated L-amino acids. Cleaves the acetyl group from N-acetyl-L-ornithine to form L-ornithine, an intermediate in L-arginine biosynthesis pathway, and a branchpoint in the synthesis of polyamines. The polypeptide is Acetylornithine deacetylase (Shigella boydii serotype 18 (strain CDC 3083-94 / BS512)).